Reading from the N-terminus, the 208-residue chain is Predicted GPI-anchored protein 37 (208 aa).

Positions 1–18 (MLFTQLIILLTVTSQALS) are cleaved as a signal peptide. The disordered stretch occupies residues 33-93 (TKRLGGGSRG…SSSSSGSRNW (61 aa)). Gly residues predominate over residues 36–53 (LGGGSRGGSSSGSRGGSS). Low complexity predominate over residues 54-63 (SGSSSGSSSG). N-linked (GlcNAc...) asparagine glycosylation is present at Asn-173. The GPI-anchor amidated serine moiety is linked to residue Ser-185. Positions 186–208 (SSLNIPSTHFYLIGFAAAYSIVL) are cleaved as a propeptide — removed in mature form.

It belongs to the PGA37 family.

It is found in the cell membrane. Predicted GPI-anchored protein which may have a role during host infection. The polypeptide is Predicted GPI-anchored protein 37 (PGA37) (Candida albicans (strain SC5314 / ATCC MYA-2876) (Yeast)).